The chain runs to 131 residues: D-ribose pyranase (131 aa).

His20 acts as the Proton donor in catalysis. Substrate contacts are provided by residues Asp28, His98, and 120-122 (YAN).

Belongs to the RbsD / FucU family. RbsD subfamily. As to quaternary structure, homodecamer.

It is found in the cytoplasm. The enzyme catalyses beta-D-ribopyranose = beta-D-ribofuranose. It participates in carbohydrate metabolism; D-ribose degradation; D-ribose 5-phosphate from beta-D-ribopyranose: step 1/2. Its function is as follows. Catalyzes the interconversion of beta-pyran and beta-furan forms of D-ribose. This is D-ribose pyranase from Bacillus cereus (strain B4264).